A 282-amino-acid chain; its full sequence is Probable endonuclease 4 (282 aa).

Positions 69, 109, 145, 179, 182, 216, 229, 231, and 261 each coordinate Zn(2+).

The protein belongs to the AP endonuclease 2 family. It depends on Zn(2+) as a cofactor.

It catalyses the reaction Endonucleolytic cleavage to 5'-phosphooligonucleotide end-products.. Endonuclease IV plays a role in DNA repair. It cleaves phosphodiester bonds at apurinic or apyrimidinic (AP) sites, generating a 3'-hydroxyl group and a 5'-terminal sugar phosphate. This is Probable endonuclease 4 from Campylobacter hominis (strain ATCC BAA-381 / DSM 21671 / CCUG 45161 / LMG 19568 / NCTC 13146 / CH001A).